A 451-amino-acid polypeptide reads, in one-letter code: L-seryl-tRNA(Sec) selenium transferase (451 aa).

Residue lysine 286 is modified to N6-(pyridoxal phosphate)lysine.

This sequence belongs to the SelA family. Requires pyridoxal 5'-phosphate as cofactor.

The protein localises to the cytoplasm. It carries out the reaction L-seryl-tRNA(Sec) + selenophosphate + H(+) = L-selenocysteinyl-tRNA(Sec) + phosphate. Its pathway is aminoacyl-tRNA biosynthesis; selenocysteinyl-tRNA(Sec) biosynthesis; selenocysteinyl-tRNA(Sec) from L-seryl-tRNA(Sec) (bacterial route): step 1/1. Its function is as follows. Converts seryl-tRNA(Sec) to selenocysteinyl-tRNA(Sec) required for selenoprotein biosynthesis. This chain is L-seryl-tRNA(Sec) selenium transferase, found in Aliarcobacter butzleri (strain RM4018) (Arcobacter butzleri).